The chain runs to 257 residues: Imidazole glycerol phosphate synthase subunit HisF (257 aa).

Active-site residues include Asp12 and Asp131.

This sequence belongs to the HisA/HisF family. Heterodimer of HisH and HisF.

It localises to the cytoplasm. The catalysed reaction is 5-[(5-phospho-1-deoxy-D-ribulos-1-ylimino)methylamino]-1-(5-phospho-beta-D-ribosyl)imidazole-4-carboxamide + L-glutamine = D-erythro-1-(imidazol-4-yl)glycerol 3-phosphate + 5-amino-1-(5-phospho-beta-D-ribosyl)imidazole-4-carboxamide + L-glutamate + H(+). It functions in the pathway amino-acid biosynthesis; L-histidine biosynthesis; L-histidine from 5-phospho-alpha-D-ribose 1-diphosphate: step 5/9. Functionally, IGPS catalyzes the conversion of PRFAR and glutamine to IGP, AICAR and glutamate. The HisF subunit catalyzes the cyclization activity that produces IGP and AICAR from PRFAR using the ammonia provided by the HisH subunit. This chain is Imidazole glycerol phosphate synthase subunit HisF, found in Mycobacteroides abscessus (strain ATCC 19977 / DSM 44196 / CCUG 20993 / CIP 104536 / JCM 13569 / NCTC 13031 / TMC 1543 / L948) (Mycobacterium abscessus).